The primary structure comprises 1292 residues: Sorbin and SH3 domain-containing protein 1 (1292 aa).

4 disordered regions span residues 1–29, 73–158, 214–275, and 318–381; these read MSSE…ATAD, LRAS…AQPE, HLQR…SSPL, and REQQ…MDEV. The segment covering 74-89 has biased composition (low complexity); that stretch reads RASSSYRETPSSSPAS. Residue Thr-82 is modified to Phosphothreonine. 2 positions are modified to phosphoserine: Ser-86 and Ser-89. Over residues 93–102 the composition is skewed to basic and acidic residues; sequence TRQHESKPGL. Phosphoserine occurs at positions 105, 114, 137, 146, 242, and 259. Over residues 114-128 the composition is skewed to polar residues; it reads LSSSADANGNAQPSS. Over residues 240-252 the composition is skewed to pro residues; sequence SFSPPPPLVPPAP. The span at 266 to 275 shows a compositional bias: polar residues; that stretch reads AVSSTDSSPL. Ser-341 bears the Phosphoserine mark. Thr-344 is modified (phosphothreonine). Phosphoserine is present on residues Glu-346 and Ser-350. A compositionally biased stretch (basic and acidic residues) spans 354-365; that stretch reads AIEKRAKDDSRR. A SoHo domain is found at 366–469; sequence VVKSTQDLSD…YSPRYSFSED (104 aa). Ser-369, Ser-374, and Asn-387 each carry phosphoserine. Residues 405-534 are disordered; sequence LNRDTPEENP…TRKYRAEPKS (130 aa). Residues 437–450 show a composition bias toward polar residues; the sequence is YTPTYQFPASTPSP. A phosphoserine mark is found at Ser-452, Ser-465, Asp-469, Ser-472, Arg-478, and Ser-481. Positions 510 to 534 are enriched in basic and acidic residues; it reads SSERNDWEPPDKKVDTRKYRAEPKS. Tyr-536 carries the post-translational modification Phosphotyrosine; by ABL1. Residues Ser-556, Asn-603, Ser-609, and Ser-640 each carry the phosphoserine modification. The tract at residues 628–650 is disordered; it reads APSANVPQSSAISPTPEISSETP. Tyr-654 carries the post-translational modification Phosphotyrosine; by ABL1. A phosphoserine mark is found at Ser-665 and Lys-700. A disordered region spans residues 692-716; sequence PLQGLSGLKRPSSSASTKDSESPRH. Thr-708 is modified (phosphothreonine). Residues Ser-713, Ile-730, Asp-735, and Ile-765 each carry the phosphoserine modification. The 60-residue stretch at 793–852 folds into the SH3 1 domain; that stretch reads SEMRPARAKFDFKAQTLKELPLQKGDIVYIYKQIDQNWYEGEHHGRVGIFPRTYIELLPP. Thr-862 is subject to Phosphothreonine. One can recognise an SH3 2 domain in the interval 867–928; the sequence is LEYGEAIAKF…PITYVDVIKR (62 aa). The residue at position 923 (Val-923) is a Phosphoserine. Tyr-937 is modified (phosphotyrosine). Low complexity predominate over residues 944–954; it reads SSPSRSATASP. Disordered stretches follow at residues 944 to 976, 1041 to 1064, 1106 to 1150, and 1162 to 1230; these read SSPS…SRRA, SDRP…TYSL, QLSD…KKSC, and TEQR…SQTS. Ser-945 and Ser-953 each carry phosphoserine. Residues 955–971 show a composition bias toward polar residues; it reads QFSSHSKLITPAPSSLP. Residues 1106 to 1117 are compositionally biased toward polar residues; that stretch reads QLSDAFSSQSKR. The span at 1119 to 1136 shows a compositional bias: basic and acidic residues; that stretch reads PWREESGQYERKAERGAG. The span at 1162-1172 shows a compositional bias: polar residues; that stretch reads TEQRLSDLNTP. Positions 1192–1203 are enriched in basic and acidic residues; sequence QTERHRGGEQAG. A compositionally biased stretch (polar residues) spans 1211-1230; that stretch reads GSQQPQAQQRRVTPDRSQTS. Gln-1213 carries the phosphoserine modification. The 62-residue stretch at 1231 to 1292 folds into the SH3 3 domain; sequence QDLFSYQALY…PGNYVKPLYL (62 aa). A Phosphotyrosine; by ABL1 modification is found at Tyr-1240.

As to quaternary structure, interacts (via third SH3 domain) with the Ten-1 ICD form of TENM1; the interaction induces the translocation of SORBS1 to the nucleus. Interacts with INSM1. Interacts with the long isoform of AFDN and with VCL. AFDN and VCL bind to SORBS1 in a competitive manner and do not form a ternary complex. Interacts with ABL1, CBL, CBLB and INPPL1/SHIP2 through the third SH3 domain. Interaction with ABL1 occurs only after insulin stimulation while this has no effect on the interaction with INPPL1. Interacts with the insulin receptor but dissociates from it following insulin stimulation. Also interacts with SCA7, PTK2/FAK1 and flotillin. Interacts (via SH3 domain 2) with PXN. Post-translationally, O-glycosylated. In terms of tissue distribution, detected in skeletal muscle (at protein level). Widely expressed with highest levels in heart and skeletal muscle.

The protein resides in the cell junction. It localises to the adherens junction. Its subcellular location is the cell membrane. The protein localises to the cytoplasm. It is found in the cytoskeleton. The protein resides in the focal adhesion. It localises to the nucleus. Its subcellular location is the nucleus matrix. Functionally, plays a role in tyrosine phosphorylation of CBL by linking CBL to the insulin receptor. Required for insulin-stimulated glucose transport. Involved in formation of actin stress fibers and focal adhesions. This is Sorbin and SH3 domain-containing protein 1 from Homo sapiens (Human).